The chain runs to 682 residues: MVTSLNEDSESITVEWIENGDTKGKEIDLESIFSLNHDLAPDEEIDPGPEMPPPPAPTTKVNKIVKNRRTVAPVKNETPAKDNRVAAVGSARARPIQPIEQSASRQQNGSVSDISPDQPGKKDFGLASRRKSNCVKEVEKLQEKRERRRLQQQELREKKAQDFDATNPNYEIMCMIKDFRGSLDYRPLTTSDPIDEHRICVCVRKRPLNKKETTIKDLDVITIPIKDVVMVHEPKQKVDLTRFLENQTFRFDYAFDETAPNETVYRFTARPLVETIFERGMATCFAYGQTGSGKTHTMGGDFSGKNQDCSKGIYALAARDVFQMLKKPNYKKLELQVYATFFEIYSGKVFDLLNRKTKLRVLEDGKQQVQVVGLQEREVKCVEDVLKLIEIGNSCRTSGQTSANAHSSRSHAVFQIILRKKGKMHGKFSLIDLAGNERGADTSSADRQTRLEGAEINKSLLALKECIRALGRNKPHTPFRASKLTQVLRDSFIGENSRTCMIATISPGMASCENTLNTLRYANRVKELDPSRCRRPPPHDTSCPQTSWMTWKQCGEWGVAPQRDDLKLLCEQNEEEVSPQLFTFHEAVSQMVEMEEQVVEDHRAVFPGTSIRWLEGLKKCLLEMTEEVDYDADSYATQLEAILEKKIDILTELRDKVKSFRAALQEEEHASKQINPKRPRAL.

The segment at 1-192 (MVTSLNEDSE…LDYRPLTTSD (192 aa)) is globular. The disordered stretch occupies residues 39–129 (LAPDEEIDPG…GKKDFGLASR (91 aa)). Residues 99 to 115 (IEQSASRQQNGSVSDIS) are compositionally biased toward polar residues. The Kinesin motor domain maps to 198–528 (RICVCVRKRP…LRYANRVKEL (331 aa)). 288-295 (GQTGSGKT) is a binding site for ATP. Residues 638 to 673 (QLEAILEKKIDILTELRDKVKSFRAALQEEEHASKQ) are a coiled coil.

It belongs to the TRAFAC class myosin-kinesin ATPase superfamily. Kinesin family. MCAK/KIF2 subfamily. Interacts with aurka and plk1. In terms of processing, phosphorylation by plk1 promotes location at spindle microtubules and spindle poles, and enhances its microtubule depolymerization activity. Phosphorylation by AURKA interferes with location at spindle microtubules and spindle poles, and inhibits its microtubule depolymerization activity.

It is found in the cytoplasm. The protein resides in the cytoskeleton. It localises to the microtubule organizing center. Its subcellular location is the centrosome. The protein localises to the spindle pole. It is found in the spindle. Functionally, plus end-directed microtubule-dependent motor. May regulate microtubule dynamics during axonal growth. Required for normal progression through mitosis. Required for normal congress of chromosomes at the metaphase plate. Required for normal spindle dynamics during mitosis. Promotes spindle turnover. Implicated in formation of bipolar mitotic spindles Has microtubule depolymerization activity. This is Kinesin-like protein KIF2A (kif2a) from Xenopus laevis (African clawed frog).